Here is a 353-residue protein sequence, read N- to C-terminus: Photosystem II protein D1 (353 aa).

An N-acetylthreonine modification is found at Thr2. Position 2 is a phosphothreonine (Thr2). 3 consecutive transmembrane segments (helical) span residues Tyr29–Ser46, His118–Leu133, and Trp142–Ala156. Position 118 (His118) interacts with chlorophyll a. Tyr126 provides a ligand contact to pheophytin a. 2 residues coordinate [CaMn4O5] cluster: Asp170 and Glu189. A helical transmembrane segment spans residues Phe197 to Leu218. Chlorophyll a is bound at residue His198. His215 lines the a quinone pocket. His215 and His272 together coordinate Fe cation. The helical transmembrane segment at Phe274 to Leu288 threads the bilayer. Positions 332, 333, 342, and 344 each coordinate [CaMn4O5] cluster. A propeptide spanning residues Ala345–Gly353 is cleaved from the precursor.

This sequence belongs to the reaction center PufL/M/PsbA/D family. In terms of assembly, PSII is composed of 1 copy each of membrane proteins PsbA, PsbB, PsbC, PsbD, PsbE, PsbF, PsbH, PsbI, PsbJ, PsbK, PsbL, PsbM, PsbT, PsbX, PsbY, PsbZ, Psb30/Ycf12, at least 3 peripheral proteins of the oxygen-evolving complex and a large number of cofactors. It forms dimeric complexes. The D1/D2 heterodimer binds P680, chlorophylls that are the primary electron donor of PSII, and subsequent electron acceptors. It shares a non-heme iron and each subunit binds pheophytin, quinone, additional chlorophylls, carotenoids and lipids. D1 provides most of the ligands for the Mn4-Ca-O5 cluster of the oxygen-evolving complex (OEC). There is also a Cl(-1) ion associated with D1 and D2, which is required for oxygen evolution. The PSII complex binds additional chlorophylls, carotenoids and specific lipids. is required as a cofactor. Post-translationally, tyr-161 forms a radical intermediate that is referred to as redox-active TyrZ, YZ or Y-Z. C-terminally processed by CTPA; processing is essential to allow assembly of the oxygen-evolving complex and thus photosynthetic growth.

The protein resides in the plastid. It is found in the chloroplast thylakoid membrane. The enzyme catalyses 2 a plastoquinone + 4 hnu + 2 H2O = 2 a plastoquinol + O2. Its function is as follows. Photosystem II (PSII) is a light-driven water:plastoquinone oxidoreductase that uses light energy to abstract electrons from H(2)O, generating O(2) and a proton gradient subsequently used for ATP formation. It consists of a core antenna complex that captures photons, and an electron transfer chain that converts photonic excitation into a charge separation. The D1/D2 (PsbA/PsbD) reaction center heterodimer binds P680, the primary electron donor of PSII as well as several subsequent electron acceptors. This chain is Photosystem II protein D1, found in Brassica napus (Rape).